A 159-amino-acid chain; its full sequence is Small ribosomal subunit protein uS9 (159 aa).

It belongs to the universal ribosomal protein uS9 family.

This Rickettsia massiliae (strain Mtu5) protein is Small ribosomal subunit protein uS9.